A 493-amino-acid polypeptide reads, in one-letter code: Cytochrome P450 Tp9025 (493 aa).

Residues 1–21 (MALYIIFLLIASSFILFSFIF) form a helical; Signal-anchor for type II membrane protein membrane-spanning segment. Asn-209 and Asn-411 each carry an N-linked (GlcNAc...) asparagine glycan. Position 433 (Cys-433) interacts with heme.

Belongs to the cytochrome P450 family. Heme serves as cofactor.

It localises to the membrane. Its pathway is secondary metabolite biosynthesis; terpenoid biosynthesis. Its function is as follows. Probably involved in the biosynthesis of germacrene-derived sesquiterpene lactones. In Tanacetum parthenium (Feverfew), this protein is Cytochrome P450 Tp9025.